A 124-amino-acid chain; its full sequence is Fluoride-specific ion channel FluC (124 aa).

The next 4 helical transmembrane spans lie at 4–24 (IVLLGLAGALGSLARYGLAGL), 35–55 (LGTFIVNVLGCLAFGFVWGVC), 67–87 (VVLLTGFMGAFTTFSTFTFES), and 96–116 (WLAFALYAGGQLLLGLALLWL). Na(+) contacts are provided by glycine 75 and threonine 78.

It belongs to the fluoride channel Fluc/FEX (TC 1.A.43) family.

The protein localises to the cell inner membrane. The enzyme catalyses fluoride(in) = fluoride(out). Na(+) is not transported, but it plays an essential structural role and its presence is essential for fluoride channel function. Functionally, fluoride-specific ion channel. Important for reducing fluoride concentration in the cell, thus reducing its toxicity. This Nitratidesulfovibrio vulgaris (strain DSM 19637 / Miyazaki F) (Desulfovibrio vulgaris) protein is Fluoride-specific ion channel FluC.